The sequence spans 264 residues: Proteasome subunit beta type-4 (264 aa).

Met1 carries the post-translational modification N-acetylmethionine. The propeptide occupies 1 to 45 (MEAFLGSRSGLWAGGPAPGQFYRIPSTPDSFMDPASALYRGPITR). A Phosphoserine modification is found at Ser26. Residue Tyr102 is modified to Phosphotyrosine.

Belongs to the peptidase T1B family. As to quaternary structure, the 26S proteasome consists of a 20S proteasome core and two 19S regulatory subunits. The 20S proteasome core is a barrel-shaped complex made of 28 subunits that are arranged in four stacked rings. The two outer rings are each formed by seven alpha subunits, and the two inner rings are formed by seven beta subunits. The proteolytic activity is exerted by three beta-subunits PSMB5, PSMB6 and PSMB7. Forms a ternary complex with SMAD1 and OAZ1 before PSMB4 is incorporated into the 20S proteasome. Interacts with PRPF19. In terms of assembly, (Microbial infection) Interacts with HTLV-1 Tax protein. (Microbial infection) Interacts with HIV-1 Nef and Tat proteins.

The protein localises to the cytoplasm. It is found in the nucleus. In terms of biological role, non-catalytic component of the 20S core proteasome complex involved in the proteolytic degradation of most intracellular proteins. This complex plays numerous essential roles within the cell by associating with different regulatory particles. Associated with two 19S regulatory particles, forms the 26S proteasome and thus participates in the ATP-dependent degradation of ubiquitinated proteins. The 26S proteasome plays a key role in the maintenance of protein homeostasis by removing misfolded or damaged proteins that could impair cellular functions, and by removing proteins whose functions are no longer required. Associated with the PA200 or PA28, the 20S proteasome mediates ubiquitin-independent protein degradation. This type of proteolysis is required in several pathways including spermatogenesis (20S-PA200 complex) or generation of a subset of MHC class I-presented antigenic peptides (20S-PA28 complex). SMAD1/OAZ1/PSMB4 complex mediates the degradation of the CREBBP/EP300 repressor SNIP1. This is Proteasome subunit beta type-4 from Homo sapiens (Human).